The sequence spans 299 residues: Acetylglutamate kinase (299 aa).

Substrate is bound by residues 70 to 71 (GG), R92, and N197.

This sequence belongs to the acetylglutamate kinase family. ArgB subfamily.

Its subcellular location is the cytoplasm. It catalyses the reaction N-acetyl-L-glutamate + ATP = N-acetyl-L-glutamyl 5-phosphate + ADP. Its pathway is amino-acid biosynthesis; L-arginine biosynthesis; N(2)-acetyl-L-ornithine from L-glutamate: step 2/4. Catalyzes the ATP-dependent phosphorylation of N-acetyl-L-glutamate. The sequence is that of Acetylglutamate kinase from Acidiphilium cryptum (strain JF-5).